Reading from the N-terminus, the 525-residue chain is GMP synthase [glutamine-hydrolyzing] (525 aa).

The Glutamine amidotransferase type-1 domain occupies 9–207; the sequence is RILILDFGSQ…VRDICQCEAL (199 aa). The active-site Nucleophile is the Cys86. Residues His181 and Glu183 contribute to the active site. In terms of domain architecture, GMPS ATP-PPase spans 208–400; it reads WTPAKIIDDA…LGLPYDMLYR (193 aa). Position 235–241 (235–241) interacts with ATP; sequence SGGVDSS.

As to quaternary structure, homodimer.

It catalyses the reaction XMP + L-glutamine + ATP + H2O = GMP + L-glutamate + AMP + diphosphate + 2 H(+). The protein operates within purine metabolism; GMP biosynthesis; GMP from XMP (L-Gln route): step 1/1. Functionally, catalyzes the synthesis of GMP from XMP. The polypeptide is GMP synthase [glutamine-hydrolyzing] (Escherichia coli O139:H28 (strain E24377A / ETEC)).